Consider the following 297-residue polypeptide: Formamidopyrimidine-DNA glycosylase (297 aa).

The active-site Schiff-base intermediate with DNA is the proline 2. Residue glutamate 3 is the Proton donor of the active site. Catalysis depends on lysine 58, which acts as the Proton donor; for beta-elimination activity. DNA is bound by residues histidine 104, arginine 127, and lysine 170. The FPG-type zinc finger occupies 261 to 297 (SVYDREGKPCRKEGCSGTIQRFVQGGRSTFYCPICQR). Arginine 287 serves as the catalytic Proton donor; for delta-elimination activity.

This sequence belongs to the FPG family. As to quaternary structure, monomer. Requires Zn(2+) as cofactor.

It carries out the reaction Hydrolysis of DNA containing ring-opened 7-methylguanine residues, releasing 2,6-diamino-4-hydroxy-5-(N-methyl)formamidopyrimidine.. The catalysed reaction is 2'-deoxyribonucleotide-(2'-deoxyribose 5'-phosphate)-2'-deoxyribonucleotide-DNA = a 3'-end 2'-deoxyribonucleotide-(2,3-dehydro-2,3-deoxyribose 5'-phosphate)-DNA + a 5'-end 5'-phospho-2'-deoxyribonucleoside-DNA + H(+). In terms of biological role, involved in base excision repair of DNA damaged by oxidation or by mutagenic agents. Acts as a DNA glycosylase that recognizes and removes damaged bases. Has a preference for oxidized purines, such as 7,8-dihydro-8-oxoguanine (8-oxoG). Has AP (apurinic/apyrimidinic) lyase activity and introduces nicks in the DNA strand. Cleaves the DNA backbone by beta-delta elimination to generate a single-strand break at the site of the removed base with both 3'- and 5'-phosphates. The protein is Formamidopyrimidine-DNA glycosylase of Chelativorans sp. (strain BNC1).